We begin with the raw amino-acid sequence, 391 residues long: Small ribosomal subunit protein bS1 (391 aa).

S1 motif domains are found at residues 16-90 (GDKV…LSRR), 108-173 (NEII…LSRK), 194-262 (GDVI…LSIK), and 279-348 (NDDI…LSIK). The segment at 356–381 (VVESDPSTTKAYLESEEEDNPTIGDM) is disordered.

The protein belongs to the bacterial ribosomal protein bS1 family.

Functionally, binds mRNA; thus facilitating recognition of the initiation point. It is needed to translate mRNA with a short Shine-Dalgarno (SD) purine-rich sequence. This chain is Small ribosomal subunit protein bS1 (rpsA), found in Staphylococcus aureus (strain MRSA252).